Consider the following 96-residue polypeptide: uncharacterized protein (96 aa).

The chain crosses the membrane as a helical span at residues 1 to 21 (MSDFEIIVGISSLLQVIILNI).

Its subcellular location is the membrane. This is an uncharacterized protein from Saccharomyces cerevisiae (strain ATCC 204508 / S288c) (Baker's yeast).